The sequence spans 517 residues: Perilipin-1 (517 aa).

Ser81 bears the Phosphoserine mark. A Phosphothreonine modification is found at Thr85. Ser126, Ser130, Ser132, Ser137, and Ser174 each carry phosphoserine. The tract at residues 197 to 217 (VESAPSSGRQKTQKAPKAKPS) is disordered. Phosphothreonine occurs at positions 224, 299, and 301. The interval 285-321 (HNLAASKDENHEDQTDTEGEETDEEEEEEESEAEENV) is disordered. The tract at residues 291 to 322 (KDENHEDQTDTEGEETDEEEEEEESEAEENVL) is required for interaction with CIDEC. The span at 299 to 319 (TDTEGEETDEEEEEEESEAEE) shows a compositional bias: acidic residues. 11 positions are modified to phosphoserine: Ser315, Ser385, Ser387, Pro408, Ser411, Ser434, Ser436, Ser440, Ser460, Ser492, and Ser494. Residues 415-495 (PESEFQDIDN…KPARRVSDSF (81 aa)) form a disordered region. Residues 483-492 (PREKPARRVS) show a composition bias toward basic and acidic residues.

It belongs to the perilipin family. As to quaternary structure, interacts with ABHD5. Interacts with CIDEC. Interacts with AQP7. In terms of processing, major cAMP-dependent protein kinase substrate in adipocytes, also dephosphorylated by PP1. When phosphorylated, may be maximally sensitive to HSL. When unphosphorylated, may play a role in the inhibition of lipolysis, by acting as a barrier in lipid droplet. The N-terminus is blocked. Adipocytes.

It is found in the endoplasmic reticulum. The protein localises to the lipid droplet. Its function is as follows. Modulator of adipocyte lipid metabolism. Coats lipid storage droplets to protect them from breakdown by hormone-sensitive lipase (HSL). Its absence may result in leanness. Plays a role in unilocular lipid droplet formation by activating CIDEC. Their interaction promotes lipid droplet enlargement and directional net neutral lipid transfer. May modulate lipolysis and triglyceride levels. The protein is Perilipin-1 (Plin1) of Rattus norvegicus (Rat).